Reading from the N-terminus, the 404-residue chain is L-cysteine:1D-myo-inositol 2-amino-2-deoxy-alpha-D-glucopyranoside ligase (404 aa).

Residue Cys-47 coordinates Zn(2+). L-cysteinyl-5'-AMP is bound by residues 47 to 50, Thr-62, and 85 to 87; these read CGIT and NIT. The 'HIGH' region signature appears at 49–59; that stretch reads ITPYDSTHLGH. A 'ERGGDP' region motif is present at residues 188 to 193; the sequence is ERGGDP. Trp-228 contacts L-cysteinyl-5'-AMP. Cys-232 is a binding site for Zn(2+). Position 250 to 252 (250 to 252) interacts with L-cysteinyl-5'-AMP; it reads GSD. His-257 serves as a coordination point for Zn(2+). Ile-284 lines the L-cysteinyl-5'-AMP pocket. The short motif at 290 to 294 is the 'KMSKS' region element; the sequence is KMSKS.

Belongs to the class-I aminoacyl-tRNA synthetase family. MshC subfamily. Monomer. Zn(2+) is required as a cofactor.

It catalyses the reaction 1D-myo-inositol 2-amino-2-deoxy-alpha-D-glucopyranoside + L-cysteine + ATP = 1D-myo-inositol 2-(L-cysteinylamino)-2-deoxy-alpha-D-glucopyranoside + AMP + diphosphate + H(+). In terms of biological role, catalyzes the ATP-dependent condensation of GlcN-Ins and L-cysteine to form L-Cys-GlcN-Ins. The protein is L-cysteine:1D-myo-inositol 2-amino-2-deoxy-alpha-D-glucopyranoside ligase of Corynebacterium striatum.